The following is a 413-amino-acid chain: PAB1-binding protein 2 (413 aa).

A compositionally biased stretch (low complexity) spans 1–23; sequence MSTETTKPSITTTPTTVLVSPNT. Residues 1–36 are disordered; the sequence is MSTETTKPSITTTPTTVLVSPNTLKRKKGEDTSEEQ. KH domains lie at 66 to 130, 148 to 213, and 330 to 394; these read DVHL…YGMI, EISI…TFYI, and FVQQ…IMLI.

Interacts with PAB1.

Its subcellular location is the nucleus. This is PAB1-binding protein 2 (PBP2) from Saccharomyces cerevisiae (strain ATCC 204508 / S288c) (Baker's yeast).